We begin with the raw amino-acid sequence, 257 residues long: MNLFVLMKRTFDTEEKIVIETGKIQDDGAEWIINPYDEYAIEEAIQLKEKHGGTITAVTVGGEEAEKELRTALAMGCDQAVLINIEDDLDEPDQYSISQVLYHYMKDQEFDLILGGNVAIDGGSGQVAPRLAELLDIPCITTITKLEINGTDAEAERDVEGDVEKIKTTLPLLVTAQQGLNEPRYPSLPGIMKAKKKPLEELELDDLDLDEEDAEPKLKTIERFLPPKKEAGKLLQGEPAEQAKELVSLLRSEAKVI.

This sequence belongs to the ETF beta-subunit/FixA family. Heterodimer of an alpha and a beta subunit. Requires FAD as cofactor. AMP is required as a cofactor.

Functionally, the electron transfer flavoprotein serves as a specific electron acceptor for other dehydrogenases. It transfers the electrons to the main respiratory chain via ETF-ubiquinone oxidoreductase (ETF dehydrogenase). This chain is Electron transfer flavoprotein subunit beta (etfB), found in Bacillus subtilis (strain 168).